The chain runs to 291 residues: tRNA pseudouridine synthase-like 1 (291 aa).

Asp-66 acts as the Nucleophile in catalysis. Tyr-130 serves as a coordination point for substrate.

The protein belongs to the tRNA pseudouridine synthase TruA family.

It catalyses the reaction a uridine in tRNA = a pseudouridine in tRNA. In Mus musculus (Mouse), this protein is tRNA pseudouridine synthase-like 1 (Pusl1).